Reading from the N-terminus, the 155-residue chain is Basic phospholipase A2 PC9 (155 aa).

The N-terminal stretch at 1 to 21 (MYPAHLLVLLAVCVSLLGASA) is a signal peptide. Residues 22-27 (ISPRPL) constitute a propeptide that is removed on maturation. Intrachain disulfides connect Cys-38/Cys-98, Cys-54/Cys-144, Cys-56/Cys-72, Cys-71/Cys-125, Cys-78/Cys-118, Cys-87/Cys-111, and Cys-105/Cys-116. Ca(2+) is bound by residues Tyr-55, Gly-57, and Gly-59. Residue His-75 is part of the active site. Asp-76 provides a ligand contact to Ca(2+). Asp-119 is an active-site residue.

Belongs to the phospholipase A2 family. Group I subfamily. D49 sub-subfamily. Requires Ca(2+) as cofactor. In terms of tissue distribution, expressed by the venom gland.

Its subcellular location is the secreted. It catalyses the reaction a 1,2-diacyl-sn-glycero-3-phosphocholine + H2O = a 1-acyl-sn-glycero-3-phosphocholine + a fatty acid + H(+). Snake venom phospholipase A2 (PLA2) that inhibits neuromuscular transmission by blocking acetylcholine release from the nerve termini. PLA2 catalyzes the calcium-dependent hydrolysis of the 2-acyl groups in 3-sn-phosphoglycerides. This is Basic phospholipase A2 PC9 from Laticauda colubrina (Yellow-lipped sea krait).